The following is a 562-amino-acid chain: Membrane protein insertase YidC (562 aa).

Residues 1–21 traverse the membrane as a helical segment; the sequence is MDIKRTILIVALAIVTYVGVL. The segment at 42-74 is disordered; it reads TAPGIPDTAAGNNGSASADVPSATGNTTSAAPL. The next 5 membrane-spanning stretches (helical) occupy residues 343-363, 369-389, 439-459, 470-490, and 517-537; these read LELTVDYGFLWFIAQPIFWLL, ILGNWGWSIIVLTMLIKGLFF, LGGCLPILVQMPVFLSLYWVL, WILWITDLSIKDPFFILPIIM, and PIIFTFFFLWFPAGLVLYWVV.

This sequence belongs to the OXA1/ALB3/YidC family. Type 1 subfamily. Interacts with the Sec translocase complex via SecD. Specifically interacts with transmembrane segments of nascent integral membrane proteins during membrane integration.

Its subcellular location is the cell inner membrane. Its function is as follows. Required for the insertion and/or proper folding and/or complex formation of integral membrane proteins into the membrane. Involved in integration of membrane proteins that insert both dependently and independently of the Sec translocase complex, as well as at least some lipoproteins. Aids folding of multispanning membrane proteins. In Pseudomonas syringae pv. tomato (strain ATCC BAA-871 / DC3000), this protein is Membrane protein insertase YidC.